The sequence spans 528 residues: PC4 and SFRS1-interacting protein (528 aa).

Residues 7–64 (PGDLIFAKMKGYPHWPARVDEVPDGAVKPPTNKLPIFFFGTHETAFLGPKDIFPYSEN) form the PWWP domain. Residue Lys75 forms a Glycyl lysine isopeptide (Lys-Gly) (interchain with G-Cter in SUMO2) linkage. Residues 86–347 (NNPKVKFSSQ…VEKKRETSMD (262 aa)) form a disordered region. Over residues 92-106 (FSSQQVSTKQSNASS) the composition is skewed to polar residues. Phosphoserine is present on residues Ser102, Ser105, and Ser106. Residues 113-135 (KETSVSKEDTDQEEKASNEDVTK) show a composition bias toward basic and acidic residues. Phosphothreonine is present on residues Thr115 and Thr122. Phosphoserine is present on Ser129. Thr141 carries the phosphothreonine modification. The span at 144–153 (AARRGRKRKA) shows a compositional bias: basic residues. The short motif at 146–156 (RRGRKRKAEKQ) is the Nuclear localization signal element. Ser176 and Ser205 each carry phosphoserine. Basic and acidic residues predominate over residues 212-260 (DEDKSKKKGPEEKPPKKQLKKEEEGQKEEEKPRKEPDKKEGKKEVESKR). Position 270 is a phosphoserine (Ser270). Thr271 is modified (phosphothreonine). Residues Ser272 and Ser274 each carry the phosphoserine modification. The span at 285–300 (KRKGGRHFQAAHRRNM) shows a compositional bias: basic residues. Residues 303 to 347 (GQHEKEAADRKRKQEEQMETEQQTKDEGKKPEVKKVEKKRETSMD) are compositionally biased toward basic and acidic residues. Coiled-coil stretches lie at residues 304-332 (QHEK…EGKK) and 369-393 (NRCI…KHTE). An integrase-binding domain (IBD) region spans residues 338–415 (VEKKRETSMD…VSQVIMEKST (78 aa)). Ser432 carries the post-translational modification Phosphoserine. Thr435 is modified (phosphothreonine). Ser441 carries the phosphoserine modification. A compositionally biased stretch (basic and acidic residues) spans 444 to 471 (EQRQHEEANKTKDQGKKGPNKKLEKEQT). Residues 444 to 528 (EQRQHEEANK…VSLKESTLDN (85 aa)) form a disordered region. The segment covering 472-492 (GTKSLNGGSDAQESNHPQHNG) has biased composition (polar residues). A compositionally biased stretch (basic and acidic residues) spans 496–528 (EESKDSREAGSKTKTPGEEREAEVSLKESTLDN). Arg515 is modified (citrulline). Ser520 bears the Phosphoserine mark. At Thr525 the chain carries Phosphothreonine.

This sequence belongs to the HDGF family. As to quaternary structure, monomer. Interacts with IFRD1/PC4. Interacts (via IBD domain) with POGZ (via IBM motif) and CDCA7L (via IBM motifs). Interacts (via IBD domain) with KMT2A (via IBM motifs) with a moderate affinity whereas interacts with the KMT2A-MEN1 complex with a greater affinity; MEN1 enhances interaction of KMT2A with PSIP1. Interacts (via IBD domain) with IWS1 (via IBM motif), MED1 (via IBM motif) and DBF4 (via IBM motifs). Post-translationally, citrullinated by PADI4.

The protein localises to the nucleus. Its function is as follows. Transcriptional coactivator involved in neuroepithelial stem cell differentiation and neurogenesis. Involved in particular in lens epithelial cell gene regulation and stress responses. May play an important role in lens epithelial to fiber cell terminal differentiation. May play a protective role during stress-induced apoptosis. In Rattus norvegicus (Rat), this protein is PC4 and SFRS1-interacting protein (Psip1).